The primary structure comprises 330 residues: Aspartate--ammonia ligase (330 aa).

The protein belongs to the class-II aminoacyl-tRNA synthetase family. AsnA subfamily.

The protein resides in the cytoplasm. It catalyses the reaction L-aspartate + NH4(+) + ATP = L-asparagine + AMP + diphosphate + H(+). It participates in amino-acid biosynthesis; L-asparagine biosynthesis; L-asparagine from L-aspartate (ammonia route): step 1/1. In Glaesserella parasuis serovar 5 (strain SH0165) (Haemophilus parasuis), this protein is Aspartate--ammonia ligase.